Here is a 508-residue protein sequence, read N- to C-terminus: Bifunctional purine biosynthesis protein PurH (508 aa).

Residues 1–144 (MTRALLSVSD…KNFASVLPIV (144 aa)) form the MGS-like domain.

It belongs to the PurH family.

It carries out the reaction (6R)-10-formyltetrahydrofolate + 5-amino-1-(5-phospho-beta-D-ribosyl)imidazole-4-carboxamide = 5-formamido-1-(5-phospho-D-ribosyl)imidazole-4-carboxamide + (6S)-5,6,7,8-tetrahydrofolate. It catalyses the reaction IMP + H2O = 5-formamido-1-(5-phospho-D-ribosyl)imidazole-4-carboxamide. It participates in purine metabolism; IMP biosynthesis via de novo pathway; 5-formamido-1-(5-phospho-D-ribosyl)imidazole-4-carboxamide from 5-amino-1-(5-phospho-D-ribosyl)imidazole-4-carboxamide (10-formyl THF route): step 1/1. Its pathway is purine metabolism; IMP biosynthesis via de novo pathway; IMP from 5-formamido-1-(5-phospho-D-ribosyl)imidazole-4-carboxamide: step 1/1. In Leuconostoc mesenteroides subsp. mesenteroides (strain ATCC 8293 / DSM 20343 / BCRC 11652 / CCM 1803 / JCM 6124 / NCDO 523 / NBRC 100496 / NCIMB 8023 / NCTC 12954 / NRRL B-1118 / 37Y), this protein is Bifunctional purine biosynthesis protein PurH.